Here is a 637-residue protein sequence, read N- to C-terminus: Chloride intracellular channel protein 6 (637 aa).

The tract at residues 1–400 (MAETAEPEGG…EASEEGDPGQ (400 aa)) is disordered. A compositionally biased stretch (low complexity) spans 35–63 (GPEASEGAAKAPSGEGAGAAAKAGATEEA). Serine 39 carries the post-translational modification Phosphoserine. Residues 126–137 (CELRGEAAREAE) are compositionally biased toward basic and acidic residues. Residues 138 to 152 (GQAAAPAAPGAQEEA) show a composition bias toward low complexity. 15 tandem repeats follow at residues 155–160 (GDSVDA), 161–166 (EGSIDA), 167–172 (GGSVDA), 173–178 (AGSVDA), 179–184 (GGSIDA), 185–190 (GGSMDA), 191–196 (GGSVDA), 197–202 (GGSIDT), 203–208 (GGSVDA), 209–214 (AGSVDA), 215–220 (GGSIDT), 221–226 (GRNVDA), 227–232 (GGSIDA), 233–238 (GGSVDA), and 239–244 (GGSMDA). A 15 X 6 AA tandem repeat of [GEA]-[DGR]-[SN]-[VIM]-D-[AT] region spans residues 155 to 244 (GDSVDAEGSI…SVDAGGSMDA (90 aa)). Over residues 247-256 (PAGGAHGAGG) the composition is skewed to gly residues. The segment covering 305–314 (GSEDAAGEDG) has biased composition (acidic residues). Residues 315–332 (DQGRPQEETEQQAERQEP) show a composition bias toward basic and acidic residues. Serine 348 and serine 393 each carry phosphoserine. The G-site signature appears at 420-423 (CPFS). A helical transmembrane segment spans residues 422-442 (FSQRLFMILWLKGVIFNVTTV). The GST C-terminal domain maps to 466-637 (DGDVKTDVNK…AYSDVAKRMK (172 aa)).

Belongs to the chloride channel CLIC family. Monomer (soluble state). Interacts with dopamine receptors DRD2, DRD3 and DRD4. Phosphorylated. Expressed in brain, chorioretinal, lacrimal glands, submandibular glands, airway epithelium, kidney and gastric mucosa, where it is preferentially expressed in cells that secrete or transport water. In brain, it is highly expressed in choroid plexus. Not detected in pancreas, adrenal glands, heart, skeletal muscle, ileal mucosa, liver and lung.

It is found in the cytoplasm. It localises to the cell membrane. It catalyses the reaction chloride(in) = chloride(out). Channel activity is redox- and pH-regulated. Inhibited by IAA-94. Functionally, in the soluble state, catalyzes glutaredoxin-like thiol disulfide exchange reactions with reduced glutathione as electron donor. Can insert into membranes and form voltage-dependent chloride-selective channels. The channel opens upon membrane depolarization at positive voltages and closes at negative membrane voltages. May play a critical role in water-secreting cells, possibly through the regulation of chloride ion transport. This is Chloride intracellular channel protein 6 (CLIC6) from Oryctolagus cuniculus (Rabbit).